The chain runs to 813 residues: Sodium/hydrogen exchanger 2 (813 aa).

The next 7 membrane-spanning stretches (helical) occupy residues 108-128 (IVPESCLLIMVGLLLGGIIFG), 139-159 (TDVFFLYLLPPIVLDAGYFMP), 170-190 (IFWYAVVGTLWNSIGIGLSLF), 210-230 (LFGSLISAVDPVAVLAVFENI), 238-258 (ILVFGESLLNDAVTVVLYNLF), 279-299 (FFVVGIGGVLIGILLGFIAAF), and 309-329 (VIEPLFVFLYSYLSYITAEMF). A glycan (N-linked (GlcNAc...) asparagine) is linked at asparagine 351. The next 4 helical transmembrane spans lie at 362 to 382 (YFMKMLSSVSETLIFIFMGVS), 393 to 413 (AFVCFTLAFCLIWRALGVFVL), 431 to 451 (FIIAYGGLRGAICFALVFLLP), and 460 to 480 (LFITAAIVVIFFTVFILGITI). A compositionally biased stretch (basic and acidic residues) spans 649–661 (LRKDNSLNRERRA). Disordered stretches follow at residues 649 to 709 (LRKD…NLQP) and 736 to 813 (DVGS…NEKP). Over residues 687–696 (VSNADGNSSD) the composition is skewed to polar residues. Basic and acidic residues-rich tracts occupy residues 770 to 781 (KDQRFGRGREDS) and 797 to 813 (RASEPGNRKGRLGNEKP).

This sequence belongs to the monovalent cation:proton antiporter 1 (CPA1) transporter (TC 2.A.36) family. As to quaternary structure, interacts with CHP1 and CHP2. In terms of tissue distribution, predominantly in small intestine, colon, and stomach, with much lower levels in skeletal muscle, kidney, brain, testis, uterus, heart and lung.

It localises to the apical cell membrane. It carries out the reaction Na(+)(in) + H(+)(out) = Na(+)(out) + H(+)(in). Li(+) activates Na(+)/H(+) exchanger. Functionally, plasma membrane Na(+)/H(+) antiporter. Mediates the electroneutral exchange of intracellular H(+) ions for extracellular Na(+). Major apical Na(+)/H(+) exchanger in the base of the colonic crypt. Controls in the colonic crypt intracellular pH (pHi) to direct colonic epithelial cell differentiation into the absorptive enterocyte lineage at the expense of the secretory lineage. The polypeptide is Sodium/hydrogen exchanger 2 (Slc9a2) (Rattus norvegicus (Rat)).